A 330-amino-acid polypeptide reads, in one-letter code: D-xylose-binding periplasmic protein (330 aa).

The first 23 residues, 1–23, serve as a signal peptide directing secretion; it reads MKIKNILLTLCTSLLLTNVAAHA.

The protein belongs to the bacterial solute-binding protein 2 family.

The protein localises to the periplasm. Involved in the high-affinity D-xylose membrane transport system. Binds with high affinity to xylose. The chain is D-xylose-binding periplasmic protein (xylF) from Escherichia coli (strain K12).